We begin with the raw amino-acid sequence, 298 residues long: Rhodopsin (298 aa).

Residues 1-15 (IHLHWYEYPPMNPMM) are Extracellular-facing. Residues 16–40 (YPLLLIFMLFTGILCLAGNFVTIWV) form a helical membrane-spanning segment. Topologically, residues 41–52 (FMNTKSLRTPAN) are cytoplasmic. A helical transmembrane segment spans residues 53 to 75 (LLVVNLAMSDFLMMFTMFPPMMV). At 76–89 (TCYYHTWTLGPTFC) the chain is on the extracellular side. An intrachain disulfide couples Cys89 to Cys166. The chain crosses the membrane as a helical span at residues 90–112 (QVYAFLGNLCGCASIWTMVFITF). The short motif at 113–115 (DRY) is the 'Ionic lock' involved in activated form stabilization element. Over 113-131 (DRYNVIVKGVAGEPLSTKK) the chain is Cytoplasmic. The chain crosses the membrane as a helical span at residues 132-152 (ASLWILTIWVLSTTWCMAPFF). Residues 153–179 (GWNHYVPEGNLTGCGTDYLSEDILSRS) are Extracellular-facing. N-linked (GlcNAc...) asparagine glycosylation occurs at Asn162. The chain crosses the membrane as a helical span at residues 180-201 (YLYVYSTWVYFLPLAITIYCYV). Residues 202–242 (FIIKAVAAHEKGMRDQAKKMGIKSLRNEEAQKTSAECRLAK) lie on the Cytoplasmic side of the membrane. Residues 243–264 (IAMTTVALWFIAWTPYLLINWV) form a helical membrane-spanning segment. The Extracellular portion of the chain corresponds to 265–275 (GMFARSYLSPV). A helical membrane pass occupies residues 276–297 (YTIWGYVFAKANAVYNPIVYAI). The residue at position 285 (Lys285) is an N6-(retinylidene)lysine.

The protein belongs to the G-protein coupled receptor 1 family. Opsin subfamily. As to quaternary structure, homodimer. Interacts with GNAQ. Post-translationally, contains one covalently linked retinal chromophore.

It localises to the cell projection. The protein resides in the rhabdomere membrane. In terms of biological role, photoreceptor required for image-forming vision at low light intensity. Can use both retinal and 3-dehydroretinal as visual pigment. Light-induced isomerization of 11-cis to all-trans retinal triggers a conformational change that activates signaling via G-proteins. Signaling via GNAQ probably mediates the activation of phospholipase C. The chain is Rhodopsin (RHO) from Procambarus orcinus (Crayfish).